The chain runs to 94 residues: Large ribosomal subunit protein bL25 (94 aa).

This sequence belongs to the bacterial ribosomal protein bL25 family. Part of the 50S ribosomal subunit; part of the 5S rRNA/L5/L18/L25 subcomplex. Contacts the 5S rRNA. Binds to the 5S rRNA independently of L5 and L18.

Functionally, this is one of the proteins that binds to the 5S RNA in the ribosome where it forms part of the central protuberance. In Edwardsiella ictaluri (strain 93-146), this protein is Large ribosomal subunit protein bL25.